We begin with the raw amino-acid sequence, 470 residues long: D-serine/D-alanine/glycine transporter (470 aa).

The next 12 membrane-spanning stretches (helical) occupy residues 30 to 50, 51 to 71, 102 to 122, 137 to 157, 162 to 182, 211 to 231, 256 to 276, 283 to 303, 350 to 370, 371 to 391, 413 to 433, and 441 to 461; these read LIAI…KTIS, LAGP…FFVM, FTGW…VVAI, VASL…VKMF, FWFA…GLVM, LSGF…IELV, IIMF…WSSV, FVEL…NFVV, FSCI…SVIG, AFTM…TIIL, PLGK…VVLL, and QALL…LFIG.

The protein belongs to the amino acid-polyamine-organocation (APC) superfamily. Amino acid transporter (AAT) (TC 2.A.3.1) family.

The protein localises to the cell inner membrane. It carries out the reaction D-alanine(in) + H(+)(in) = D-alanine(out) + H(+)(out). The enzyme catalyses D-serine(out) + H(+)(out) = D-serine(in) + H(+)(in). The catalysed reaction is glycine(in) + H(+)(in) = glycine(out) + H(+)(out). Functionally, permease that is involved in the transport across the cytoplasmic membrane of D-alanine, D-serine and glycine. The protein is D-serine/D-alanine/glycine transporter (cycA) of Escherichia coli O157:H7.